Here is a 488-residue protein sequence, read N- to C-terminus: Inosine-5'-monophosphate dehydrogenase (488 aa).

2 CBS domains span residues 94 to 150 and 154 to 215; these read IVSE…SKTV and MTKK…CKDE. Residues D249, 249 to 251, and 299 to 301 each bind NAD(+); these read DSS and GIG. 2 residues coordinate K(+): G301 and G303. S304 contributes to the IMP binding site. Residue C306 participates in K(+) binding. Residue C306 is the Thioimidate intermediate of the active site. IMP contacts are provided by residues 339 to 341, 362 to 363, and 386 to 390; these read DGG, GS, and YRGMG. R402 (proton acceptor) is an active-site residue. E416 contributes to the IMP binding site. 3 residues coordinate K(+): E470, S471, and H472.

Belongs to the IMPDH/GMPR family. Homotetramer. K(+) is required as a cofactor.

It carries out the reaction IMP + NAD(+) + H2O = XMP + NADH + H(+). Its pathway is purine metabolism; XMP biosynthesis via de novo pathway; XMP from IMP: step 1/1. Mycophenolic acid (MPA) is a non-competitive inhibitor that prevents formation of the closed enzyme conformation by binding to the same site as the amobile flap. In contrast, mizoribine monophosphate (MZP) is a competitive inhibitor that induces the closed conformation. MPA is a potent inhibitor of mammalian IMPDHs but a poor inhibitor of the bacterial enzymes. MZP is a more potent inhibitor of bacterial IMPDH. Catalyzes the conversion of inosine 5'-phosphate (IMP) to xanthosine 5'-phosphate (XMP), the first committed and rate-limiting step in the de novo synthesis of guanine nucleotides, and therefore plays an important role in the regulation of cell growth. The polypeptide is Inosine-5'-monophosphate dehydrogenase (Haemophilus influenzae (strain ATCC 51907 / DSM 11121 / KW20 / Rd)).